A 312-amino-acid chain; its full sequence is Ornithine carbamoyltransferase (312 aa).

Residues 57–60, Q84, R108, and 135–138 each bind carbamoyl phosphate; these read STRT and HPCQ. Residues N166, D226, and 230 to 231 each bind L-ornithine; that span reads SM. Carbamoyl phosphate contacts are provided by residues 265–266 and R293; that span reads CL.

It belongs to the aspartate/ornithine carbamoyltransferase superfamily. OTCase family.

It localises to the cytoplasm. It catalyses the reaction carbamoyl phosphate + L-ornithine = L-citrulline + phosphate + H(+). The protein operates within amino-acid biosynthesis; L-arginine biosynthesis; L-arginine from L-ornithine and carbamoyl phosphate: step 1/3. Its function is as follows. Reversibly catalyzes the transfer of the carbamoyl group from carbamoyl phosphate (CP) to the N(epsilon) atom of ornithine (ORN) to produce L-citrulline. This is Ornithine carbamoyltransferase from Brucella suis biovar 1 (strain 1330).